The primary structure comprises 254 residues: Hydroxyacylglutathione hydrolase (254 aa).

Positions 53, 55, 57, 58, 111, 128, and 166 each coordinate Zn(2+).

The protein belongs to the metallo-beta-lactamase superfamily. Glyoxalase II family. As to quaternary structure, monomer. Zn(2+) is required as a cofactor.

The catalysed reaction is an S-(2-hydroxyacyl)glutathione + H2O = a 2-hydroxy carboxylate + glutathione + H(+). The protein operates within secondary metabolite metabolism; methylglyoxal degradation; (R)-lactate from methylglyoxal: step 2/2. Functionally, thiolesterase that catalyzes the hydrolysis of S-D-lactoyl-glutathione to form glutathione and D-lactic acid. The polypeptide is Hydroxyacylglutathione hydrolase (Aeromonas salmonicida (strain A449)).